Reading from the N-terminus, the 183-residue chain is Ribosome rescue factor SmrB (183 aa).

In terms of domain architecture, Smr spans 98-173 (LDLHGLTQQQ…GDAALLVLIE (76 aa)).

It belongs to the SmrB family. In terms of assembly, associates with collided ribosomes, but not with correctly translating polysomes.

Acts as a ribosome collision sensor. Detects stalled/collided disomes (pairs of ribosomes where the leading ribosome is stalled and a second ribosome has collided with it) and endonucleolytically cleaves mRNA at the 5' boundary of the stalled ribosome. Stalled/collided disomes form a new interface (primarily via the 30S subunits) that binds SmrB. Cleaved mRNA becomes available for tmRNA ligation, leading to ribosomal subunit dissociation and rescue of stalled ribosomes. The polypeptide is Ribosome rescue factor SmrB (Klebsiella pneumoniae (strain 342)).